A 1175-amino-acid polypeptide reads, in one-letter code: Structural maintenance of chromosomes protein 2-1 (1175 aa).

The region spanning 2-1161 (HIKEICLEGF…NVLFRTKFVD (1160 aa)) is the Zinc-hook domain. 32–39 (GLNGSGKS) serves as a coordination point for ATP. Positions 172–508 (RMYENKKEAA…AQLANFQFTY (337 aa)) form a coiled coil. An SMC hinge domain is found at 518-638 (SKVKGVVAKL…KTTDVAKEVA (121 aa)). The stretch at 673–1028 (LRKLHDLAEA…ELDEKKKETL (356 aa)) forms a coiled coil.

The protein belongs to the SMC family. SMC2 subfamily. Forms a heterodimer with SMC4. Component of the condensin complex, which contains the SMC2 and SMC4 heterodimer, and three non SMC subunits that probably regulate the complex: CAPH, CAPD2 and CAPG. In terms of tissue distribution, highly expressed in roots and young floral buds.

It is found in the nucleus. Central component of the condensin complex, a complex required for conversion of interphase chromatin into mitotic-like condense chromosomes. The condensin complex probably introduces positive supercoils into relaxed DNA in the presence of type I topoisomerases and converts nicked DNA into positive knotted forms in the presence of type II topoisomerases. Also involved in chromosome segregation in meiosis. The chain is Structural maintenance of chromosomes protein 2-1 (SMC2-1) from Arabidopsis thaliana (Mouse-ear cress).